The chain runs to 156 residues: Isotocin-neurophysin IT 2 (156 aa).

The first 19 residues, 1 to 19, serve as a signal peptide directing secretion; sequence MTGAAVSVCLLYALSVCSA. C20 and C25 are disulfide-bonded. G28 is modified (glycine amide). Intrachain disulfides connect C41–C85, C44–C58, C52–C75, C59–C65, C92–C105, C99–C117, and C106–C111.

The protein belongs to the vasopressin/oxytocin family. Seven disulfide bonds are present in neurophysin.

The protein resides in the secreted. Its function is as follows. Isotocin causes contraction of smooth muscles. This is Isotocin-neurophysin IT 2 from Oncorhynchus keta (Chum salmon).